The primary structure comprises 583 residues: Poly [ADP-ribose] polymerase 2 (583 aa).

Positions 1–77 (MAARRRRSTG…GMPGRSWASK (77 aa)) are disordered. The N-terminal region (NTR) stretch occupies residues 1–103 (MAARRRRSTG…VDPECTAKVG (103 aa)). 2 short sequence motifs (nuclear localization signal) span residues 21–22 (KR) and 35–40 (PAKKTR). N6-acetyllysine is present on residues Lys-37 and Lys-38. Over residues 57 to 67 (ANKDRTEDKQD) the composition is skewed to basic and acidic residues. One can recognise a WGR domain in the interval 104–201 (KAHVYCEGND…EKFEKVPGKY (98 aa)). Phosphoserine is present on residues Ser-226 and Ser-232. One can recognise a PARP alpha-helical domain in the interval 231–348 (ESQLDLRVQE…DIEIAIKLVK (118 aa)). The region spanning 356 to 583 (HPLDQHYRNL…KVQFNFLQLW (228 aa)) is the PARP catalytic domain. NAD(+) is bound by residues 428–430 (HGS), Gly-437, Arg-444, and Ser-470. Residue Glu-558 is the For poly [ADP-ribose] polymerase activity of the active site.

The protein belongs to the ARTD/PARP family. As to quaternary structure, component of a base excision repair (BER) complex, containing at least XRCC1, PARP1, POLB and LRIG3. Homo- and heterodimer with PARP1. Interacts (via the PARP catalytic domain) with HPF1. Interacts with core nucleosomes. Auto poly-ADP-ribosylated on serine residues, leading to dissociation of the PARP2-HPF1 complex from chromatin. Poly-ADP-ribosylated by PARP1. In terms of processing, acetylation reduces DNA binding and enzymatic activity. Post-translationally, proteolytically cleaved by caspase-8 (CASP8) in response to apoptosis, leading to its inactivation. As to expression, widely expressed, mainly in actively dividing tissues. The highest levels are in the brain, heart, pancreas, skeletal muscle and testis; also detected in kidney, liver, lung, placenta, ovary and spleen; levels are low in leukocytes, colon, small intestine, prostate and thymus.

Its subcellular location is the nucleus. The protein resides in the chromosome. The enzyme catalyses NAD(+) + (ADP-D-ribosyl)n-acceptor = nicotinamide + (ADP-D-ribosyl)n+1-acceptor + H(+).. It carries out the reaction L-seryl-[protein] + NAD(+) = O-(ADP-D-ribosyl)-L-seryl-[protein] + nicotinamide + H(+). The catalysed reaction is L-aspartyl-[protein] + NAD(+) = 4-O-(ADP-D-ribosyl)-L-aspartyl-[protein] + nicotinamide. It catalyses the reaction L-glutamyl-[protein] + NAD(+) = 5-O-(ADP-D-ribosyl)-L-glutamyl-[protein] + nicotinamide. Its activity is regulated as follows. ADP-ribosyltransferase activity is regulated via an allosteric activation mechanism. In absence of activation signal, PARP2 is autoinhibited by the PARP alpha-helical domain (also named HD region), which prevents effective NAD(+)-binding. Activity is highly stimulated by signals, which unfold the PARP alpha-helical domain, relieving autoinhibition. Poly-ADP-ribosyltransferase activity is tightly regulated and PARP2 is removed from damaged chromatin following initial poly-ADP-ribosylation of chromatin to avoid prolonged residence (trapping) that has cytotoxic consequences. CHD1L promotes PARP2 removal from chromatin. ADP-ribosyltransferase activity is inhibited by a number of PARP inhibitors (PARPi) compounds, that are used the treatment of breast or ovarian cancers that have defects in DNA repair by homologous recombination. PARPi molecules (niraparib, talazoparib, and, to a lesser extent, olaparib) also trap PARP2 at DNA damage sites. Functionally, poly-ADP-ribosyltransferase that mediates poly-ADP-ribosylation of proteins and plays a key role in DNA repair. Mediates glutamate, aspartate or serine ADP-ribosylation of proteins: the ADP-D-ribosyl group of NAD(+) is transferred to the acceptor carboxyl group of target residues and further ADP-ribosyl groups are transferred to the 2'-position of the terminal adenosine moiety, building up a polymer with an average chain length of 20-30 units. Serine ADP-ribosylation of proteins constitutes the primary form of ADP-ribosylation of proteins in response to DNA damage. Mediates glutamate and aspartate ADP-ribosylation of target proteins in absence of HPF1. Following interaction with HPF1, catalyzes serine ADP-ribosylation of target proteins; HPF1 conferring serine specificity by completing the PARP2 active site. PARP2 initiates the repair of double-strand DNA breaks: recognizes and binds DNA breaks within chromatin and recruits HPF1, licensing serine ADP-ribosylation of target proteins, such as histones, thereby promoting decompaction of chromatin and the recruitment of repair factors leading to the reparation of DNA strand breaks. HPF1 initiates serine ADP-ribosylation but restricts the polymerase activity of PARP2 in order to limit the length of poly-ADP-ribose chains. Specifically mediates formation of branched poly-ADP-ribosylation. Branched poly-ADP-ribose chains are specifically recognized by some factors, such as APLF. In addition to proteins, also able to ADP-ribosylate DNA: preferentially acts on 5'-terminal phosphates at DNA strand breaks termini in nicked duplex. The protein is Poly [ADP-ribose] polymerase 2 of Homo sapiens (Human).